A 719-amino-acid polypeptide reads, in one-letter code: Glycine--tRNA ligase beta subunit (719 aa).

The disordered stretch occupies residues 65–84; sequence PDREEEIKGPPAKAAFKDGK.

It belongs to the class-II aminoacyl-tRNA synthetase family. As to quaternary structure, tetramer of two alpha and two beta subunits.

The protein resides in the cytoplasm. It carries out the reaction tRNA(Gly) + glycine + ATP = glycyl-tRNA(Gly) + AMP + diphosphate. This Trichodesmium erythraeum (strain IMS101) protein is Glycine--tRNA ligase beta subunit.